Consider the following 148-residue polypeptide: Urease accessory protein UreE (148 aa).

The protein belongs to the UreE family.

It localises to the cytoplasm. Involved in urease metallocenter assembly. Binds nickel. Probably functions as a nickel donor during metallocenter assembly. This Nostoc punctiforme (strain ATCC 29133 / PCC 73102) protein is Urease accessory protein UreE.